Consider the following 371-residue polypeptide: Phosphatase IMPL1, chloroplastic (371 aa).

The N-terminal 60 residues, 1 to 60 (MGRSLIFSGNMSLRISHLPRSSLPLQNPISGRTVNRTFRYRCTRILSNSFKSTTRLQTKA), are a transit peptide targeting the chloroplast. V61 is subject to N-acetylvaline. Mg(2+)-binding residues include E148, D165, L167, and D168. Residue E148 participates in substrate binding. Substrate contacts are provided by residues 167-170 (LDGT), 273-275 (GAA), E292, and D299. D299 lines the Mg(2+) pocket.

It belongs to the inositol monophosphatase superfamily. Mg(2+) is required as a cofactor. Ubiquitous. Expressed in pistil and seed endosperm.

The protein resides in the plastid. It localises to the chloroplast stroma. The catalysed reaction is a myo-inositol phosphate + H2O = myo-inositol + phosphate. It functions in the pathway polyol metabolism; myo-inositol biosynthesis; myo-inositol from D-glucose 6-phosphate: step 2/2. Functionally, phosphatase acting preferentially on D-myoinositol 1-phosphate (D-Ins 1-P). The polypeptide is Phosphatase IMPL1, chloroplastic (IMPL1) (Arabidopsis thaliana (Mouse-ear cress)).